A 195-amino-acid polypeptide reads, in one-letter code: Putative C-P lyase subunit protein HtxG (195 aa).

It belongs to the PhnH family.

Its function is as follows. Belongs to an operon involved in hypophosphite oxidation. Exact function not known. This chain is Putative C-P lyase subunit protein HtxG (htxG), found in Stutzerimonas stutzeri (Pseudomonas stutzeri).